Reading from the N-terminus, the 119-residue chain is Beta-2-microglobulin (119 aa).

The N-terminal stretch at M1–A20 is a signal peptide. The Ig-like C1-type domain occupies P25 to K114. C45 and C100 form a disulfide bridge.

The protein belongs to the beta-2-microglobulin family. In terms of assembly, heterodimer of an alpha chain and a beta chain. Beta-2-microglobulin is the beta-chain of major histocompatibility complex class I molecules.

Its subcellular location is the secreted. Functionally, component of the class I major histocompatibility complex (MHC). Involved in the presentation of peptide antigens to the immune system. This chain is Beta-2-microglobulin (B2M), found in Aotus azarae (Azara's night monkey).